Consider the following 762-residue polypeptide: Putative cation exchanger YDL206W (762 aa).

Positions 1–26 (MHKPLRWLITIAFYVSNVILIGYSLS) are cleaved as a signal peptide. The Extracellular portion of the chain corresponds to 27–30 (SNGS). Asn28 carries N-linked (GlcNAc...) asparagine glycosylation. The helical transmembrane segment at 31-51 (ISEFYLHSVVLIECFSLLGVV) threads the bilayer. At 52 to 102 (TSDCLTPSLSYISSNIFHISDRVSGMTLLALGNALPDITSTYQSMKSGVTS) the chain is on the cytoplasmic side. A helical transmembrane segment spans residues 103–123 (LAIGELFGGIFFLLTVVIGLM). At 124–156 (GCVATIQFQHDKSIETYTEESFDQNLSYDRSNY) the chain is on the extracellular side. N-linked (GlcNAc...) asparagine glycosylation occurs at Asn148. The chain crosses the membrane as a helical span at residues 157-177 (ILDVGIFTFMLLVSGTFLADG). Arg178 is a topological domain (cytoplasmic). The helical transmembrane segment at 179 to 199 (LYFWECIVMVLTYCCCAVYLI) threads the bilayer. The Extracellular portion of the chain corresponds to 200-501 (KSYKYPCEIN…YNYLTDVSLE (302 aa)). N-linked (GlcNAc...) asparagine glycans are attached at residues Asn280 and Asn329. Residues 502–522 (IGFFEFLSLLVTTPVSIILYL) traverse the membrane as a helical segment. The Cytoplasmic portion of the chain corresponds to 523–554 (SIPSEISQTDHDLPLSYLQNIQLIASPIILNQ). A helical transmembrane segment spans residues 555–575 (LITNNFSFWLLILSLVIAILL). Topologically, residues 576 to 589 (YFKTRTIPNKFNSD) are extracellular. Residues 590–610 (IIFTVAFLLSLACLSKAVHII) form a helical membrane-spanning segment. The Cytoplasmic segment spans residues 611-615 (VVTLT). The helical transmembrane segment at 616–636 (HWINVFNISETILGLTIFTWG) threads the bilayer. Residues 637-650 (NSIGDLVSNITFVK) lie on the Extracellular side of the membrane. Residue Asn645 is glycosylated (N-linked (GlcNAc...) asparagine). The chain crosses the membrane as a helical span at residues 651 to 671 (IGVLEIAIGACFGSPLLYFLF). Topologically, residues 672–709 (GVGFDGIMIMLGDKTGKIVSGRDSNILMHHIDFKVDKN) are cytoplasmic. The helical transmembrane segment at 710-730 (LINTGVGILIAFLIFTVLIPL) threads the bilayer. Over 731–738 (NDWKIDKK) the chain is Extracellular. Residues 739–759 (ISIALLTLYIVVTCISVFLEV) traverse the membrane as a helical segment. Topologically, residues 760–762 (HQV) are cytoplasmic.

Belongs to the Ca(2+):cation antiporter (CaCA) (TC 2.A.19) family.

It is found in the membrane. Putative cation exchanger. In Saccharomyces cerevisiae (strain ATCC 204508 / S288c) (Baker's yeast), this protein is Putative cation exchanger YDL206W.